The sequence spans 321 residues: o-succinylbenzoate synthase (321 aa).

K110 serves as the catalytic Proton donor. The Mg(2+) site is built by D138, E165, and D188. The active-site Proton acceptor is K212.

The protein belongs to the mandelate racemase/muconate lactonizing enzyme family. MenC type 1 subfamily. The cofactor is a divalent metal cation.

The enzyme catalyses (1R,6R)-6-hydroxy-2-succinyl-cyclohexa-2,4-diene-1-carboxylate = 2-succinylbenzoate + H2O. It functions in the pathway quinol/quinone metabolism; 1,4-dihydroxy-2-naphthoate biosynthesis; 1,4-dihydroxy-2-naphthoate from chorismate: step 4/7. Its pathway is quinol/quinone metabolism; menaquinone biosynthesis. Functionally, converts 2-succinyl-6-hydroxy-2,4-cyclohexadiene-1-carboxylate (SHCHC) to 2-succinylbenzoate (OSB). The protein is o-succinylbenzoate synthase of Mycolicibacterium smegmatis (strain ATCC 700084 / mc(2)155) (Mycobacterium smegmatis).